Reading from the N-terminus, the 122-residue chain is Large ribosomal subunit protein bL12 (122 aa).

The protein belongs to the bacterial ribosomal protein bL12 family. In terms of assembly, homodimer. Part of the ribosomal stalk of the 50S ribosomal subunit. Forms a multimeric L10(L12)X complex, where L10 forms an elongated spine to which 2 to 4 L12 dimers bind in a sequential fashion. Binds GTP-bound translation factors.

Its function is as follows. Forms part of the ribosomal stalk which helps the ribosome interact with GTP-bound translation factors. Is thus essential for accurate translation. The polypeptide is Large ribosomal subunit protein bL12 (Shewanella putrefaciens (strain CN-32 / ATCC BAA-453)).